We begin with the raw amino-acid sequence, 647 residues long: DNA mismatch repair protein MutL (647 aa).

Positions 389-423 (SESSVSSVANKQQPTVKQAKRSADDSDSEHGKLDY) are disordered. A compositionally biased stretch (basic and acidic residues) spans 409-423 (RSADDSDSEHGKLDY).

It belongs to the DNA mismatch repair MutL/HexB family.

This protein is involved in the repair of mismatches in DNA. It is required for dam-dependent methyl-directed DNA mismatch repair. May act as a 'molecular matchmaker', a protein that promotes the formation of a stable complex between two or more DNA-binding proteins in an ATP-dependent manner without itself being part of a final effector complex. The sequence is that of DNA mismatch repair protein MutL from Streptococcus thermophilus (strain ATCC BAA-491 / LMD-9).